Here is a 219-residue protein sequence, read N- to C-terminus: MPRGRKSRRRRNARAAEENRNNRKIQASEASETPMAASVVASTPEDDLSGPEEDPSTPEEASTTPEEASSTAQAQKPSVPRSNFQGTKKSLLMSILALIFIMGNSAKEALVWKVLGKLGMQPGRQHSIFGDPKKIVTEEFVRRGYLIYKPVPRSSPVEYEFFWGPRAHVESSKLKVMHFVARVRNRCSKDWPCNYDWDSDDDAEVEAILNSGARGYSAP.

The span at Met1 to Ala13 shows a compositional bias: basic residues. A disordered region spans residues Met1–Phe84. Residues Met1 to Asp198 form the MAGE domain. Positions Pro44 to Thr57 are enriched in acidic residues. A compositionally biased stretch (low complexity) spans Pro58–Ala74. Residue Tyr195 is modified to Phosphotyrosine.

This Homo sapiens (Human) protein is Melanoma-associated antigen H1 (MAGEH1).